The sequence spans 963 residues: Importin-13 (963 aa).

HEAT repeat units lie at residues 24–54 (ENVEKALHQLYYDPNIENKNLAQKWLMQAQA), 56–88 (PQAWHFSWQLLQPDKVPEIQYFGASALHIKISR), 95–135 (TDQY…LSMM), 142–179 (AVADMVRLFQAEDSPVDSQGRCLALLELLTVLPEEFQT), 194–231 (LAVECGAVFPLLEQLLQQPSSPSCVRQKVLKCFSSWVQ), 236–268 (LQDCEALIQAAFAALQDSELFDSSVEAIVNAIS), 276–325 (VNTL…ALLD), 330–372 (WQSF…DDIL), 375–438 (EAEK…YEML), 440–476 (AELLSNLYDKLGRLLTSSEEPYSWQHTEALLYGFQSI), 487–522 (VVPGLIGLIPRISISNVQLADTVMFTIGALSEWLAD), 524–558 (PVMINSVLPLVLHALGNPELSISSVSTLKKICREC), 562–600 (LPPYAANIVAVSQDVLMKQIHKTSQCMWLMQALGFLLSA), 603–648 (VEEI…SNLF), 676–716 (PVVV…VKTL), 720–754 (FAPMVPQLCEMLGRMYSTIPQASALDLTRQLVHIF), 761–803 (FPPI…ALKR), 815–845 (VKAVFQCAVLALKFPEAPTVKASCGFFTELL), 860–893 (EDGRMLLIAVLEAIGGQASRSLMDCFADILFALN), and 897–931 (FSLLSVWIKEALQAPGFPSARLSPEQKDTFSQQIL). Positions 45 to 111 (AQKWLMQAQA…KAQLFTQITR (67 aa)) constitute an Importin N-terminal domain.

The protein belongs to the importin beta family. Interacts with UBC9, RAN, RBM8A, eIF-1A and PAX6.

Its subcellular location is the cytoplasm. The protein resides in the nucleus. Functionally, functions in nuclear protein import as nuclear transport receptor. Serves as receptor for nuclear localization signals (NLS) in cargo substrates. Is thought to mediate docking of the importin/substrate complex to the nuclear pore complex (NPC) through binding to nucleoporin and the complex is subsequently translocated through the pore by an energy requiring, Ran-dependent mechanism. At the nucleoplasmic side of the NPC, Ran binds to the importin, the importin/substrate complex dissociates and importin is re-exported from the nucleus to the cytoplasm where GTP hydrolysis releases Ran. The directionality of nuclear import is thought to be conferred by an asymmetric distribution of the GTP- and GDP-bound forms of Ran between the cytoplasm and nucleus. Mediates the nuclear import of UBC9, the RBM8A/MAGOH complex, PAX6 and probably other members of the paired homeobox family. Also mediates nuclear export of eIF-1A, and the cytoplasmic release of eIF-1A is triggered by the loading of import substrates onto IPO13. This is Importin-13 (IPO13) from Bos taurus (Bovine).